Here is a 193-residue protein sequence, read N- to C-terminus: Probable nicotinate-nucleotide adenylyltransferase (193 aa).

Belongs to the NadD family.

The enzyme catalyses nicotinate beta-D-ribonucleotide + ATP + H(+) = deamido-NAD(+) + diphosphate. Its pathway is cofactor biosynthesis; NAD(+) biosynthesis; deamido-NAD(+) from nicotinate D-ribonucleotide: step 1/1. Functionally, catalyzes the reversible adenylation of nicotinate mononucleotide (NaMN) to nicotinic acid adenine dinucleotide (NaAD). This Endomicrobium trichonymphae protein is Probable nicotinate-nucleotide adenylyltransferase.